The sequence spans 690 residues: Signal peptide peptidase-like 2C (690 aa).

A signal peptide spans 1-28; the sequence is MACLGSLHPLGSLLLLFLLLLLSPEARG. The Lumenal segment spans residues 29–192; that stretch reads EYGLVRVVSK…APLEPVTDYN (164 aa). The PA domain occupies 87-166; sequence DSSPRQRPLH…AVLRYTDMLD (80 aa). N-linked (GlcNAc...) asparagine glycosylation occurs at Asn-106. A helical membrane pass occupies residues 193 to 213; sequence MAIIFILAVGTVAAGGYWAGL. Over 214-260 the chain is Cytoplasmic; it reads MEANKLQRRQAQRGGGLGGHNQQQTVAAERSQRAWEDDDFEDAPMDF. A helical membrane pass occupies residues 261–283; the sequence is TPAMTGAVVTMSCSIMILLYFFY. Residue Asp-284 is a topological domain, lumenal. Residues 285-307 traverse the membrane as a helical segment; sequence CFVYVMIGIFSLGASTGLYSCLA. Over 308–328 the chain is Cytoplasmic; it reads PILCHLPLWRYQWVLPGQRVS. Residues 329–349 traverse the membrane as a helical segment; the sequence is VTWPLLLLAGLCAMVTVLWVI. Residues 350–354 lie on the Lumenal side of the membrane; that stretch reads HRNED. The chain crosses the membrane as a helical span at residues 355–373; the sequence is HWAWLLQDTLGVAYCLFVL. The Cytoplasmic portion of the chain corresponds to 374 to 384; it reads RRVRLPTFKNC. A helical transmembrane segment spans residues 385–405; that stretch reads TLFLLALLAFDVFFVFITPLF. Asp-395 is an active-site residue. Residues 406 to 448 are Lumenal-facing; the sequence is TKTGESIMVEVASGPADSSSHERLPMVLKVPRLSFSALTLCNQ. Residues 449 to 469 form a helical membrane-spanning segment; that stretch reads PFSILGFGDIVVPGFLVAYCH. Asp-457 is a catalytic residue. At 470-482 the chain is on the cytoplasmic side; it reads RFDMQVQSRQVYY. The chain crosses the membrane as a helical span at residues 483-503; sequence MACTVAYAVGLLVTFVAMILM. A topological domain (lumenal) is located at residue Gln-504. The helical transmembrane segment at 505 to 525 threads the bilayer; that stretch reads MGQPALLYLVSSTLLTSLAVA. Residues 508 to 510 carry the PAL motif; the sequence is PAL. Residues 526-690 lie on the Cytoplasmic side of the membrane; the sequence is TCRQEFTLFW…KKSMSAQAPL (165 aa). Residues 564–573 show a composition bias toward basic and acidic residues; the sequence is EDAKDSRTTN. The disordered stretch occupies residues 564-633; it reads EDAKDSRTTN…DPNELPSGSP (70 aa). Residues 615–624 show a composition bias toward polar residues; the sequence is SEGWSDTNLD.

Belongs to the peptidase A22B family. As to quaternary structure, interacts (via active sites) with FREY; the interaction stabilizes FREY1 protein and inhibits SPPL2C proteolytic activity. Glycosylated. As to expression, highly expressed in testis where it is primarily localised in spermatids (at protein level).

The protein localises to the endoplasmic reticulum membrane. In terms of biological role, sperm-specific intramembrane-cleaving aspartic protease (I-CLiP) that cleaves distinct tail-anchored proteins and SNARE proteins. In elongated spermatids, modulates intracellular Ca(2+) homeostasis by controlling PLN abundance through proteolytic cleavage. During spermatogenesis, processes SNARE proteins and impacts vesicular trafficking which supports compartmental reorganization in maturating spermatids and may play a role in formation of the acrosome. Functionally, in round spermatids, acts as a scaffold protein supporting FREY1 in IZUMO1 recruitment at the endoplasmic reticulum membrane and coordination of IZUMO1 complex assembly. Stabilizes FREY1 at the endoplasmic reticulum membrane through interaction. May recruit IZUMO1 interaction partners. Its function is as follows. No difference in cleavage specificity compared to isoform 1. The chain is Signal peptide peptidase-like 2C from Mus musculus (Mouse).